Reading from the N-terminus, the 1202-residue chain is DNA-directed RNA polymerase subunit beta (1202 aa).

The protein belongs to the RNA polymerase beta chain family. As to quaternary structure, the RNAP catalytic core consists of 2 alpha, 1 beta, 1 beta' and 1 omega subunit. When a sigma factor is associated with the core the holoenzyme is formed, which can initiate transcription.

It catalyses the reaction RNA(n) + a ribonucleoside 5'-triphosphate = RNA(n+1) + diphosphate. Functionally, DNA-dependent RNA polymerase catalyzes the transcription of DNA into RNA using the four ribonucleoside triphosphates as substrates. This chain is DNA-directed RNA polymerase subunit beta, found in Leuconostoc mesenteroides subsp. mesenteroides (strain ATCC 8293 / DSM 20343 / BCRC 11652 / CCM 1803 / JCM 6124 / NCDO 523 / NBRC 100496 / NCIMB 8023 / NCTC 12954 / NRRL B-1118 / 37Y).